A 187-amino-acid polypeptide reads, in one-letter code: Probable chemoreceptor glutamine deamidase CheD 1 (187 aa).

This sequence belongs to the CheD family.

The catalysed reaction is L-glutaminyl-[protein] + H2O = L-glutamyl-[protein] + NH4(+). Probably deamidates glutamine residues to glutamate on methyl-accepting chemotaxis receptors (MCPs), playing an important role in chemotaxis. The protein is Probable chemoreceptor glutamine deamidase CheD 1 of Ruegeria sp. (strain TM1040) (Silicibacter sp.).